A 232-amino-acid chain; its full sequence is Phosphatidylserine decarboxylase proenzyme (232 aa).

S190 functions as the Schiff-base intermediate with substrate; via pyruvic acid in the catalytic mechanism. Position 190 is a pyruvic acid (Ser); by autocatalysis (S190).

Belongs to the phosphatidylserine decarboxylase family. PSD-A subfamily. In terms of assembly, heterodimer of a large membrane-associated beta subunit and a small pyruvoyl-containing alpha subunit. It depends on pyruvate as a cofactor. Is synthesized initially as an inactive proenzyme. Formation of the active enzyme involves a self-maturation process in which the active site pyruvoyl group is generated from an internal serine residue via an autocatalytic post-translational modification. Two non-identical subunits are generated from the proenzyme in this reaction, and the pyruvate is formed at the N-terminus of the alpha chain, which is derived from the carboxyl end of the proenzyme. The post-translation cleavage follows an unusual pathway, termed non-hydrolytic serinolysis, in which the side chain hydroxyl group of the serine supplies its oxygen atom to form the C-terminus of the beta chain, while the remainder of the serine residue undergoes an oxidative deamination to produce ammonia and the pyruvoyl prosthetic group on the alpha chain.

It is found in the cell membrane. It carries out the reaction a 1,2-diacyl-sn-glycero-3-phospho-L-serine + H(+) = a 1,2-diacyl-sn-glycero-3-phosphoethanolamine + CO2. The protein operates within phospholipid metabolism; phosphatidylethanolamine biosynthesis; phosphatidylethanolamine from CDP-diacylglycerol: step 2/2. Its function is as follows. Catalyzes the formation of phosphatidylethanolamine (PtdEtn) from phosphatidylserine (PtdSer). The chain is Phosphatidylserine decarboxylase proenzyme from Mesorhizobium japonicum (strain LMG 29417 / CECT 9101 / MAFF 303099) (Mesorhizobium loti (strain MAFF 303099)).